Here is a 396-residue protein sequence, read N- to C-terminus: Glycerate kinase (396 aa).

The protein belongs to the glycerate kinase type-2 family.

Its subcellular location is the cytoplasm. The catalysed reaction is (R)-glycerate + ATP = (2R)-3-phosphoglycerate + ADP + H(+). This Macaca fascicularis (Crab-eating macaque) protein is Glycerate kinase (GLYCTK).